The primary structure comprises 544 residues: Chaperonin GroEL (544 aa).

ATP contacts are provided by residues 30 to 33 (TLGP), K51, 87 to 91 (DGTTT), G415, and D495.

The protein belongs to the chaperonin (HSP60) family. As to quaternary structure, forms a cylinder of 14 subunits composed of two heptameric rings stacked back-to-back. Interacts with the co-chaperonin GroES.

The protein localises to the cytoplasm. It catalyses the reaction ATP + H2O + a folded polypeptide = ADP + phosphate + an unfolded polypeptide.. Its function is as follows. Together with its co-chaperonin GroES, plays an essential role in assisting protein folding. The GroEL-GroES system forms a nano-cage that allows encapsulation of the non-native substrate proteins and provides a physical environment optimized to promote and accelerate protein folding. In Neisseria meningitidis serogroup B (strain ATCC BAA-335 / MC58), this protein is Chaperonin GroEL.